A 263-amino-acid polypeptide reads, in one-letter code: 5'-nucleotidase SurE (263 aa).

Residues aspartate 8, aspartate 9, serine 43, and asparagine 96 each coordinate a divalent metal cation.

Belongs to the SurE nucleotidase family. A divalent metal cation is required as a cofactor.

The protein localises to the cytoplasm. The catalysed reaction is a ribonucleoside 5'-phosphate + H2O = a ribonucleoside + phosphate. In terms of biological role, nucleotidase that shows phosphatase activity on nucleoside 5'-monophosphates. The polypeptide is 5'-nucleotidase SurE (Jannaschia sp. (strain CCS1)).